The primary structure comprises 237 residues: Phosphoribosylaminoimidazole-succinocarboxamide synthase (237 aa).

This sequence belongs to the SAICAR synthetase family.

It catalyses the reaction 5-amino-1-(5-phospho-D-ribosyl)imidazole-4-carboxylate + L-aspartate + ATP = (2S)-2-[5-amino-1-(5-phospho-beta-D-ribosyl)imidazole-4-carboxamido]succinate + ADP + phosphate + 2 H(+). It functions in the pathway purine metabolism; IMP biosynthesis via de novo pathway; 5-amino-1-(5-phospho-D-ribosyl)imidazole-4-carboxamide from 5-amino-1-(5-phospho-D-ribosyl)imidazole-4-carboxylate: step 1/2. The polypeptide is Phosphoribosylaminoimidazole-succinocarboxamide synthase (Escherichia coli O7:K1 (strain IAI39 / ExPEC)).